Reading from the N-terminus, the 312-residue chain is Glyoxylate/hydroxypyruvate reductase A (312 aa).

Residue R227 is part of the active site. The active-site Proton donor is H275.

This sequence belongs to the D-isomer specific 2-hydroxyacid dehydrogenase family. GhrA subfamily.

The protein resides in the cytoplasm. It carries out the reaction glycolate + NADP(+) = glyoxylate + NADPH + H(+). It catalyses the reaction (R)-glycerate + NAD(+) = 3-hydroxypyruvate + NADH + H(+). The enzyme catalyses (R)-glycerate + NADP(+) = 3-hydroxypyruvate + NADPH + H(+). Catalyzes the NADPH-dependent reduction of glyoxylate and hydroxypyruvate into glycolate and glycerate, respectively. The chain is Glyoxylate/hydroxypyruvate reductase A from Salmonella typhi.